Here is a 389-residue protein sequence, read N- to C-terminus: MQQHSSKTAYVYSDKLLQYRFHDQHPFNQMRLKLTTELLLNANLLSPEQIVQPRIATDDELMLIHKYDYVEAIKHASHGIISEDEAKKYGLNDEENSQFKHMHRHSATIVGGALTLADLIMSGKVLNGCHLGGGLHHAQPGRASGFCIYNDIAITAQYLAKEYNQRVLIIDTDAHHGDGTQWSFYADNHVTTYSIHETGKFLFPGSGHYTERGEDIGYGHTVNVPLEPYTEDASFLECFKLTVEPVVKSFKPDIILSVNGVDIHYRDPLTHLNCTLHSLYEIPYFVKYLADSYTNGKVIMFGGGGYNIWRVVPRAWSHVFLSLIDQPIQSGYLPLEWINKWKHYSSELLPKRWEDRLNDYTYVPRTKEISEKNKKLALHIASWYESTRQ.

The protein belongs to the histone deacetylase family.

It functions in the pathway ketone degradation; acetoin degradation. In terms of biological role, role in growth on acetoin or butanediol. Involved in the breakdown of these compounds used as a carbon source. The sequence is that of Acetoin utilization protein AcuC (acuC) from Staphylococcus aureus (strain MSSA476).